The following is a 95-amino-acid chain: Sec-independent protein translocase protein TatA (95 aa).

A helical membrane pass occupies residues 1 to 21; it reads MFGRLGAPEIILILVVIILLF. Over residues 44 to 55 the composition is skewed to basic and acidic residues; it reads AKAMKSEAKADD. The interval 44 to 95 is disordered; the sequence is AKAMKSEAKADDAAPADPPNPEQSAAQRTIQAAPGDVTSSRPVTEPTDTTKR.

It belongs to the TatA/E family. As to quaternary structure, the Tat system comprises two distinct complexes: a TatABC complex, containing multiple copies of TatA, TatB and TatC subunits, and a separate TatA complex, containing only TatA subunits. Substrates initially bind to the TatABC complex, which probably triggers association of the separate TatA complex to form the active translocon.

Its subcellular location is the cell membrane. In terms of biological role, part of the twin-arginine translocation (Tat) system that transports large folded proteins containing a characteristic twin-arginine motif in their signal peptide across membranes. TatA could form the protein-conducting channel of the Tat system. The protein is Sec-independent protein translocase protein TatA of Streptomyces coelicolor (strain ATCC BAA-471 / A3(2) / M145).